Consider the following 170-residue polypeptide: Photosystem I assembly protein Ycf3 (170 aa).

3 TPR repeats span residues 35–68, 72–105, and 120–153; these read AFTHYRDGMSAQSEGEYAEALQNYYEAMRLEIDP, SYILYNIGLIHTSNGEHAKALEYYFQALERNSSL, and GEQAIEEGDPETCEVWFDQAADYWKKAISLAPSN.

It belongs to the Ycf3 family.

The protein localises to the plastid. It is found in the chloroplast thylakoid membrane. Essential for the assembly of the photosystem I (PSI) complex. May act as a chaperone-like factor to guide the assembly of the PSI subunits. In Anthoceros angustus (Hornwort), this protein is Photosystem I assembly protein Ycf3.